Reading from the N-terminus, the 622-residue chain is 1-deoxy-D-xylulose-5-phosphate synthase (622 aa).

Residues histidine 80 and 121-123 each bind thiamine diphosphate; that span reads GHS. A Mg(2+)-binding site is contributed by aspartate 152. Residues 153–154, asparagine 181, tyrosine 288, and glutamate 370 each bind thiamine diphosphate; that span reads GA. Asparagine 181 serves as a coordination point for Mg(2+).

The protein belongs to the transketolase family. DXPS subfamily. As to quaternary structure, homodimer. Mg(2+) serves as cofactor. Thiamine diphosphate is required as a cofactor.

It catalyses the reaction D-glyceraldehyde 3-phosphate + pyruvate + H(+) = 1-deoxy-D-xylulose 5-phosphate + CO2. It participates in metabolic intermediate biosynthesis; 1-deoxy-D-xylulose 5-phosphate biosynthesis; 1-deoxy-D-xylulose 5-phosphate from D-glyceraldehyde 3-phosphate and pyruvate: step 1/1. Catalyzes the acyloin condensation reaction between C atoms 2 and 3 of pyruvate and glyceraldehyde 3-phosphate to yield 1-deoxy-D-xylulose-5-phosphate (DXP). The sequence is that of 1-deoxy-D-xylulose-5-phosphate synthase from Shewanella amazonensis (strain ATCC BAA-1098 / SB2B).